A 373-amino-acid polypeptide reads, in one-letter code: MKILVIGAGPAGLVFASQLKQARPLWAIDIVEKNDEQEVLGWGVVLPGRPGQHPANPLSYLDAPERLNPQFLEDFKLVHHNEPSLMSTGVLLCGVERRGLVHALRDKCRSQGIAIRFESPLLEHGELPLADYDLVVLANGVNHKTAHFTEALVPQVDYGRNKYIWYGTSQLFDQMNLVFRTHGKDIFIAHAYKYSDTMSTFIVECSEETYARARLGEMSEEASAEYVAKVFQAELGGHGLVSQPGLGWRNFMTLSHDRCHDGKLVLLGDALQSGHFSIGHGTTMAVVVAQLLVKALCTEDGVPAALKRFEERALPLVQLFRGHADNSRVWFETVEERMHLSSAEFVQSFDARRKSLPPMPEALAQNLRYALQR.

2–20 serves as a coordination point for FAD; the sequence is KILVIGAGPAGLVFASQLK.

Requires FAD as cofactor.

It catalyses the reaction protodeoxyviolaceinate + NADH + O2 + H(+) = protoviolaceinate + NAD(+) + H2O. It carries out the reaction protodeoxyviolaceinate + NADPH + O2 + H(+) = protoviolaceinate + NADP(+) + H2O. It functions in the pathway pigment biosynthesis; violacein biosynthesis. Catalyzes the oxygenation of the 6-position of protodeoxyviolaceinate to form proviolacein. The protein is Protodeoxyviolaceinate monooxygenase (vioD) of Chromobacterium violaceum (strain ATCC 12472 / DSM 30191 / JCM 1249 / CCUG 213 / NBRC 12614 / NCIMB 9131 / NCTC 9757 / MK).